A 378-amino-acid chain; its full sequence is Cytochrome b (378 aa).

4 helical membrane passes run 34-54, 78-99, 114-134, and 179-199; these read FGSLLGLCLMLQILTGLFLAM, WFLRICHANGASFFFACLFIHV, WNTGVIILFLTMATGFLGYVL, and FFTFHFIFPFIILALMMIHLL. 2 residues coordinate heme b: His-84 and His-98. Heme b-binding residues include His-183 and His-197. A ubiquinone is bound at residue His-202. The next 4 helical transmembrane spans lie at 227–247, 289–309, 321–341, and 348–368; these read YKDIFGFIVFLWILVTFIWKF, LGGVIALVLSIAILLILPFTH, LNQILFWNMVIVASLLTWIGA, and YILTGQILTVLYFSYFIINPL.

It belongs to the cytochrome b family. As to quaternary structure, the main subunits of complex b-c1 are: cytochrome b, cytochrome c1 and the Rieske protein. Heme b is required as a cofactor.

Its subcellular location is the mitochondrion inner membrane. Functionally, component of the ubiquinol-cytochrome c reductase complex (complex III or cytochrome b-c1 complex) that is part of the mitochondrial respiratory chain. The b-c1 complex mediates electron transfer from ubiquinol to cytochrome c. Contributes to the generation of a proton gradient across the mitochondrial membrane that is then used for ATP synthesis. In Anopheles gambiae (African malaria mosquito), this protein is Cytochrome b (mt:Cyt-b).